Consider the following 167-residue polypeptide: Putative C-type lectin-like domain family 1 (167 aa).

Topologically, residues 1–67 (MVSNFFHVIQ…KYDCPFSGTS (67 aa)) are cytoplasmic. The chain crosses the membrane as a helical; Signal-anchor for type II membrane protein span at residues 68-88 (FVVFSLFLICAMAGDVVYADI). Residues 89–167 (KTVRTSPLEL…DITAMVRFNI (79 aa)) lie on the Extracellular side of the membrane. N-linked (GlcNAc...) asparagine glycans are attached at residues Asn109, Asn140, and Asn149. The region spanning 116–167 (SCPAKDWKVHKGKCYWIAETKKSWNKSQNDCAINNSYLMVIQDITAMVRFNI) is the C-type lectin; atypical domain.

As to expression, expressed in spleen, lymph node, and tonsil. Lower expression in peripheral blood, bone marrow, and colon. No expression detected in thymus. Highly expressed in dendritic and B-cells.

Its subcellular location is the cell membrane. May function in mediating immune cell-cell interactions. May act as a T-cell costimulatory molecule, enhancing anti-CD3-induced proliferation. May play a role in the interaction of dendritic cells with T-cells and the cells of the adaptive immune response. The protein is Putative C-type lectin-like domain family 1 of Homo sapiens (Human).